A 249-amino-acid chain; its full sequence is ATP synthase subunit a (249 aa).

Helical transmembrane passes span 33–53 (GQVIAVSWIVFAILIIASIAA), 92–112 (LPFIGTLFLFIFVSNWLGALI), 131–151 (INTTVALALLTSLAYFYAGIS), 196–216 (LVVAVLVFLVPLVVPLPLMAL), and 217–237 (GLFTSAIQALVFATLAGAYIH).

Belongs to the ATPase A chain family. As to quaternary structure, F-type ATPases have 2 components, CF(1) - the catalytic core - and CF(0) - the membrane proton channel. CF(1) has five subunits: alpha(3), beta(3), gamma(1), delta(1), epsilon(1). CF(0) has four main subunits: a, b, b' and c.

Its subcellular location is the cellular thylakoid membrane. In terms of biological role, key component of the proton channel; it plays a direct role in the translocation of protons across the membrane. The chain is ATP synthase subunit a from Microcystis aeruginosa (strain NIES-843 / IAM M-2473).